Consider the following 158-residue polypeptide: Phosphopantetheine adenylyltransferase (158 aa).

Thr10 serves as a coordination point for substrate. Residues Thr10–Phe11 and His18 each bind ATP. Positions 42, 74, and 88 each coordinate substrate. Residues Gly89–Arg91, Glu99, and Trp124–Thr130 each bind ATP.

The protein belongs to the bacterial CoaD family. Homohexamer. Requires Mg(2+) as cofactor.

Its subcellular location is the cytoplasm. It carries out the reaction (R)-4'-phosphopantetheine + ATP + H(+) = 3'-dephospho-CoA + diphosphate. It participates in cofactor biosynthesis; coenzyme A biosynthesis; CoA from (R)-pantothenate: step 4/5. Functionally, reversibly transfers an adenylyl group from ATP to 4'-phosphopantetheine, yielding dephospho-CoA (dPCoA) and pyrophosphate. The chain is Phosphopantetheine adenylyltransferase from Actinobacillus pleuropneumoniae serotype 3 (strain JL03).